Here is a 285-residue protein sequence, read N- to C-terminus: MKTVAVLSKPSKPELSEIIPPLQEWLGQHGYEVIFDQQSAIYVSGIHGVERAKIAAMHPEFAIVLGGDGTLLSAARAVAPAGIPILAVNLGSLGFLTEVPLQDMYSTLERVIACNCPLDERTMLACDLIRDGQVLHSYTSLNDVVVNKSAIARLVGFDVSIDGRFVFNYKADGVIVATPTGSTAYSLAAGGPVLMPAVGAFQITPVCPHSLTHRPVVVPETATISIVVRSNGEAAFLTIDGQVGQPLKEGDEIVCRKADHAVKLLQMRQSFFKVLREKLKWGERE.

The active-site Proton acceptor is Asp68. NAD(+) is bound by residues 68–69 (DG), 142–143 (ND), Arg153, Lys170, Asp172, and Gln242.

It belongs to the NAD kinase family. A divalent metal cation serves as cofactor.

Its subcellular location is the cytoplasm. The catalysed reaction is NAD(+) + ATP = ADP + NADP(+) + H(+). Its function is as follows. Involved in the regulation of the intracellular balance of NAD and NADP, and is a key enzyme in the biosynthesis of NADP. Catalyzes specifically the phosphorylation on 2'-hydroxyl of the adenosine moiety of NAD to yield NADP. The polypeptide is NAD kinase (Koribacter versatilis (strain Ellin345)).